Reading from the N-terminus, the 60-residue chain is UPF0509 protein Ent638_2183 (60 aa).

The protein belongs to the UPF0509 family.

The protein is UPF0509 protein Ent638_2183 of Enterobacter sp. (strain 638).